A 177-amino-acid polypeptide reads, in one-letter code: Photosystem I assembly protein Ycf4 (177 aa).

2 consecutive transmembrane segments (helical) span residues 20 to 40 (VALL…SSYF) and 60 to 80 (LVMG…WAVI).

This sequence belongs to the Ycf4 family.

It localises to the cellular thylakoid membrane. Its function is as follows. Seems to be required for the assembly of the photosystem I complex. This chain is Photosystem I assembly protein Ycf4, found in Synechococcus sp. (strain RCC307).